The following is a 205-amino-acid chain: Colicin-E8 (205 aa).

2 disordered regions span residues 24–109 (AQTD…PDRI) and 136–187 (PELS…VYDM). Composition is skewed to basic and acidic residues over residues 53-76 (QERRKQKENKEKDAKDKLDKESKR), 88-99 (PVGDKWLDDAGK), and 159-178 (RNKDTVGGRRSFELHHDKPI). Zn(2+) is bound by residues histidine 173, histidine 198, and histidine 202.

It belongs to the colicin/pyosin nuclease family.

This plasmid-coded bactericidal protein is an endonuclease active on both single- and double-stranded DNA but with undefined specificity. Functionally, colicins are polypeptide toxins produced by and active against E.coli and closely related bacteria. The chain is Colicin-E8 (col) from Escherichia coli.